A 330-amino-acid chain; its full sequence is MKLKLYNVRGEEAVLAKKWADDNGIEISLTESPLTPETVKEAEGFDGIANAQIGPLDDAIYPLLKEMGIKQIAQHSASVDMYNLDLATENDIIITNVPSYSPESIAEFTVTIVLNLIRHVELIRENVKKQNFTWGLPIRGRVLGDMTVAIIGTGRIGLATAKIFKGFGCKVVGYDIYQSDAAKAVLDYKESVEEAIKDADLVSLHMPPTAENTHLFNSDLFKSFKKGAILMNMARGAVIETQDLLDALDAGLLSGAGIDTYEFEGPYIPKNFEGQEITDSLFKALINHPKVIYTPHAAYYTDEAVKNLVEGALNATVEIIKTGTTTTRVN.

Residues 155–156, Asp-175, 206–207, Asn-212, 233–235, and Asp-259 contribute to the NAD(+) site; these read RI, MP, and MAR. Residue Arg-235 is part of the active site. The active site involves Glu-264. His-296 serves as the catalytic Proton donor.

Belongs to the D-isomer specific 2-hydroxyacid dehydrogenase family.

The enzyme catalyses (R)-lactate + NAD(+) = pyruvate + NADH + H(+). The sequence is that of D-lactate dehydrogenase (ldhD) from Streptococcus pyogenes serotype M1.